A 95-amino-acid chain; its full sequence is Cell division protein FtsB (95 aa).

The Cytoplasmic portion of the chain corresponds to 1 to 3 (MRW). The helical transmembrane segment at 4-21 (VLAGLTALLLWLQGLLWF) threads the bilayer. Residues 22–95 (GEGGLNDVRG…QIIEREDDAR (74 aa)) lie on the Periplasmic side of the membrane. Positions 26 to 76 (LNDVRGLSRSVEAQREEVDRLRQRNQALEAEVNDLKTGLEALEERARSELG) form a coiled coil.

This sequence belongs to the FtsB family. In terms of assembly, part of a complex composed of FtsB, FtsL and FtsQ.

The protein resides in the cell inner membrane. Essential cell division protein. May link together the upstream cell division proteins, which are predominantly cytoplasmic, with the downstream cell division proteins, which are predominantly periplasmic. The polypeptide is Cell division protein FtsB (Alkalilimnicola ehrlichii (strain ATCC BAA-1101 / DSM 17681 / MLHE-1)).